Consider the following 288-residue polypeptide: Thymidylate synthase (288 aa).

DUMP-binding positions include R21 and 150–151 (RR). C170 (nucleophile) is an active-site residue. Residues 191–194 (RSGD), N202, and 232–234 (HIY) contribute to the dUMP site. Residue D194 coordinates (6R)-5,10-methylene-5,6,7,8-tetrahydrofolate. (6R)-5,10-methylene-5,6,7,8-tetrahydrofolate is bound at residue A287.

It belongs to the thymidylate synthase family. Bacterial-type ThyA subfamily. As to quaternary structure, homodimer.

The protein resides in the cytoplasm. It carries out the reaction dUMP + (6R)-5,10-methylene-5,6,7,8-tetrahydrofolate = 7,8-dihydrofolate + dTMP. It participates in pyrimidine metabolism; dTTP biosynthesis. Functionally, catalyzes the reductive methylation of 2'-deoxyuridine-5'-monophosphate (dUMP) to 2'-deoxythymidine-5'-monophosphate (dTMP) while utilizing 5,10-methylenetetrahydrofolate (mTHF) as the methyl donor and reductant in the reaction, yielding dihydrofolate (DHF) as a by-product. This enzymatic reaction provides an intracellular de novo source of dTMP, an essential precursor for DNA biosynthesis. This is Thymidylate synthase from Mesoplasma florum (strain ATCC 33453 / NBRC 100688 / NCTC 11704 / L1) (Acholeplasma florum).